Consider the following 510-residue polypeptide: 2,3-bisphosphoglycerate-independent phosphoglycerate mutase (510 aa).

Mn(2+)-binding residues include aspartate 12 and serine 62. The active-site Phosphoserine intermediate is serine 62. Substrate contacts are provided by residues histidine 123, 153–154, arginine 185, arginine 191, 260–263, and lysine 335; these read RD and RPDR. 5 residues coordinate Mn(2+): aspartate 402, histidine 406, aspartate 443, histidine 444, and histidine 461.

This sequence belongs to the BPG-independent phosphoglycerate mutase family. Monomer. The cofactor is Mn(2+).

It catalyses the reaction (2R)-2-phosphoglycerate = (2R)-3-phosphoglycerate. It functions in the pathway carbohydrate degradation; glycolysis; pyruvate from D-glyceraldehyde 3-phosphate: step 3/5. Its function is as follows. Catalyzes the interconversion of 2-phosphoglycerate and 3-phosphoglycerate. The polypeptide is 2,3-bisphosphoglycerate-independent phosphoglycerate mutase (Listeria innocua serovar 6a (strain ATCC BAA-680 / CLIP 11262)).